A 379-amino-acid polypeptide reads, in one-letter code: Nucleosome assembly protein 1;2 (379 aa).

Residues 26 to 80 (VNALKNKLQNLAGQHSDVLENLTPPVRKRVEFLREIQNQYDEMEAKFFEERAALE) are a coiled coil. A Phosphoserine modification is found at Ser-41. The Nuclear export signal motif lies at 47–62 (LTPPVRKRVEFLREIQ). Positions 222–227 (KKKPKK) match the Nuclear localization signal motif. The interval 298–379 (AVEADDLDIE…GERPPECKQQ (82 aa)) is disordered. Over residues 299 to 342 (VEADDLDIEDDDDEIDEDDDEEDEEDDEDDEEEDDEDDDEEEEA) the composition is skewed to acidic residues. Residues 347 to 360 (KSKKKSSAGHKKAG) show a composition bias toward basic residues. Cys-376 is modified (cysteine methyl ester). Residue Cys-376 is the site of S-farnesyl cysteine attachment. Residues 377–379 (KQQ) constitute a propeptide, removed in mature form.

It belongs to the nucleosome assembly protein (NAP) family. In terms of assembly, can form homomeric and heteromeric protein complexes with NAP1;1, NAP1;3 and NAP1;4. Binds histone H2A. Ubiquitous.

The protein localises to the nucleus. It is found in the cytoplasm. Functionally, may modulate chromatin structure by regulation of nucleosome assembly/disassembly. May function in nucleotide excision repair (NER). Involved in somatic homologous recombination. This Arabidopsis thaliana (Mouse-ear cress) protein is Nucleosome assembly protein 1;2 (NAP1;2).